The following is a 343-amino-acid chain: uncharacterized protein (343 aa).

Residue 33–40 (GPKSSGKS) coordinates ATP.

Belongs to the archaeal ATPase family.

This is an uncharacterized protein from Methanocaldococcus jannaschii (strain ATCC 43067 / DSM 2661 / JAL-1 / JCM 10045 / NBRC 100440) (Methanococcus jannaschii).